Here is a 519-residue protein sequence, read N- to C-terminus: Tetratricopeptide repeat protein 31 (519 aa).

The stretch at 147–197 forms a coiled coil; that stretch reads QKLLVTEEEANRLAEELVAEEERMKQKAEKKRLKKKRQKERKRQERLEQYC. The segment covering 175-187 has biased composition (basic residues); that stretch reads EKKRLKKKRQKER. 2 disordered regions span residues 175–230 and 253–294; these read EKKR…EEDS and RREK…VQAS. Position 278 is a phosphoserine (Ser-278). TPR repeat units follow at residues 305 to 338, 339 to 372, and 373 to 406; these read SQEL…NPQD, HRLF…RPGW, and PRGL…GSQP. Residues 474–506 are disordered; that stretch reads PSCHRSHPNQPLSQTQSRRPHPLKPQDPSKGWD. Residues 481-490 are compositionally biased toward polar residues; the sequence is PNQPLSQTQS.

This is Tetratricopeptide repeat protein 31 (TTC31) from Homo sapiens (Human).